We begin with the raw amino-acid sequence, 381 residues long: Queuine tRNA-ribosyltransferase (381 aa).

Asp-89 serves as the catalytic Proton acceptor. Substrate-binding positions include 89–93 (DSGGF), Asp-143, Gln-187, and Gly-214. Residues 245–251 (GVGKPED) form an RNA binding region. Residue Asp-264 is the Nucleophile of the active site. The interval 269 to 273 (TRNAR) is RNA binding; important for wobble base 34 recognition. Residues Cys-302, Cys-304, Cys-307, and His-333 each coordinate Zn(2+).

This sequence belongs to the queuine tRNA-ribosyltransferase family. In terms of assembly, homodimer. Within each dimer, one monomer is responsible for RNA recognition and catalysis, while the other monomer binds to the replacement base PreQ1. Requires Zn(2+) as cofactor.

It catalyses the reaction 7-aminomethyl-7-carbaguanine + guanosine(34) in tRNA = 7-aminomethyl-7-carbaguanosine(34) in tRNA + guanine. Its pathway is tRNA modification; tRNA-queuosine biosynthesis. Catalyzes the base-exchange of a guanine (G) residue with the queuine precursor 7-aminomethyl-7-deazaguanine (PreQ1) at position 34 (anticodon wobble position) in tRNAs with GU(N) anticodons (tRNA-Asp, -Asn, -His and -Tyr). Catalysis occurs through a double-displacement mechanism. The nucleophile active site attacks the C1' of nucleotide 34 to detach the guanine base from the RNA, forming a covalent enzyme-RNA intermediate. The proton acceptor active site deprotonates the incoming PreQ1, allowing a nucleophilic attack on the C1' of the ribose to form the product. After dissociation, two additional enzymatic reactions on the tRNA convert PreQ1 to queuine (Q), resulting in the hypermodified nucleoside queuosine (7-(((4,5-cis-dihydroxy-2-cyclopenten-1-yl)amino)methyl)-7-deazaguanosine). The protein is Queuine tRNA-ribosyltransferase of Pectobacterium carotovorum subsp. carotovorum (strain PC1).